A 64-amino-acid chain; its full sequence is DNA gyrase inhibitor YacG (64 aa).

Cysteine 9, cysteine 12, cysteine 28, and cysteine 32 together coordinate Zn(2+). A disordered region spans residues lysine 45–proline 64. Residues serine 54–proline 64 are compositionally biased toward acidic residues.

It belongs to the DNA gyrase inhibitor YacG family. In terms of assembly, interacts with GyrB. The cofactor is Zn(2+).

Inhibits all the catalytic activities of DNA gyrase by preventing its interaction with DNA. Acts by binding directly to the C-terminal domain of GyrB, which probably disrupts DNA binding by the gyrase. The sequence is that of DNA gyrase inhibitor YacG from Klebsiella pneumoniae (strain 342).